A 167-amino-acid polypeptide reads, in one-letter code: Photosystem I assembly protein Ycf3 (167 aa).

3 TPR repeats span residues 35–68 (AFSYYRDGMSAQSEGEYAEALANYYEALNLEEDP), 72–105 (SFILYNIGLIHASNGEYVKALDYYHKALEANNKL), and 120–153 (AVKASEINDLETAQALFHEAAQYWKQAIKLAPSN).

It belongs to the Ycf3 family.

Its subcellular location is the plastid. The protein resides in the chloroplast thylakoid membrane. In terms of biological role, essential for the assembly of the photosystem I (PSI) complex. May act as a chaperone-like factor to guide the assembly of the PSI subunits. This chain is Photosystem I assembly protein Ycf3, found in Galdieria sulphuraria (Red alga).